The chain runs to 807 residues: Glycerol-3-phosphate acyltransferase (807 aa).

Positions 308-313 match the HXXXXD motif motif; it reads CHRSHM.

Belongs to the GPAT/DAPAT family.

It is found in the cell inner membrane. The catalysed reaction is sn-glycerol 3-phosphate + an acyl-CoA = a 1-acyl-sn-glycero-3-phosphate + CoA. The protein operates within phospholipid metabolism; CDP-diacylglycerol biosynthesis; CDP-diacylglycerol from sn-glycerol 3-phosphate: step 1/3. This Shewanella woodyi (strain ATCC 51908 / MS32) protein is Glycerol-3-phosphate acyltransferase.